A 102-amino-acid chain; its full sequence is Large ribosomal subunit protein mL63 (102 aa).

It belongs to the mitochondrion-specific ribosomal protein mL63 family. As to quaternary structure, component of the mitochondrial large ribosomal subunit (mt-LSU). Mature mammalian 55S mitochondrial ribosomes consist of a small (28S) and a large (39S) subunit. The 28S small subunit contains a 12S ribosomal RNA (12S mt-rRNA) and 30 different proteins. The 39S large subunit contains a 16S rRNA (16S mt-rRNA), a copy of mitochondrial valine transfer RNA (mt-tRNA(Val)), which plays an integral structural role, and 52 different proteins.

The protein localises to the mitochondrion. In Homo sapiens (Human), this protein is Large ribosomal subunit protein mL63 (MRPL57).